The primary structure comprises 346 residues: S-adenosylmethionine:tRNA ribosyltransferase-isomerase (346 aa).

Belongs to the QueA family. In terms of assembly, monomer.

The protein localises to the cytoplasm. The enzyme catalyses 7-aminomethyl-7-carbaguanosine(34) in tRNA + S-adenosyl-L-methionine = epoxyqueuosine(34) in tRNA + adenine + L-methionine + 2 H(+). It participates in tRNA modification; tRNA-queuosine biosynthesis. Transfers and isomerizes the ribose moiety from AdoMet to the 7-aminomethyl group of 7-deazaguanine (preQ1-tRNA) to give epoxyqueuosine (oQ-tRNA). The sequence is that of S-adenosylmethionine:tRNA ribosyltransferase-isomerase from Nitrosomonas eutropha (strain DSM 101675 / C91 / Nm57).